A 165-amino-acid chain; its full sequence is 2-C-methyl-D-erythritol 2,4-cyclodiphosphate synthase (165 aa).

A divalent metal cation is bound by residues aspartate 11 and histidine 13. 4-CDP-2-C-methyl-D-erythritol 2-phosphate-binding positions include 11–13 (DVH) and 40–41 (HS). Histidine 48 lines the a divalent metal cation pocket. 4-CDP-2-C-methyl-D-erythritol 2-phosphate contacts are provided by residues 62–64 (DIG), 67–71 (FPDTD), 137–140 (TTSE), phenylalanine 144, and arginine 147.

Belongs to the IspF family. In terms of assembly, homotrimer. Requires a divalent metal cation as cofactor.

It carries out the reaction 4-CDP-2-C-methyl-D-erythritol 2-phosphate = 2-C-methyl-D-erythritol 2,4-cyclic diphosphate + CMP. It participates in isoprenoid biosynthesis; isopentenyl diphosphate biosynthesis via DXP pathway; isopentenyl diphosphate from 1-deoxy-D-xylulose 5-phosphate: step 4/6. Involved in the biosynthesis of isopentenyl diphosphate (IPP) and dimethylallyl diphosphate (DMAPP), two major building blocks of isoprenoid compounds. Catalyzes the conversion of 4-diphosphocytidyl-2-C-methyl-D-erythritol 2-phosphate (CDP-ME2P) to 2-C-methyl-D-erythritol 2,4-cyclodiphosphate (ME-CPP) with a corresponding release of cytidine 5-monophosphate (CMP). The protein is 2-C-methyl-D-erythritol 2,4-cyclodiphosphate synthase of Rubrobacter xylanophilus (strain DSM 9941 / JCM 11954 / NBRC 16129 / PRD-1).